The primary structure comprises 416 residues: Protein MID1-COMPLEMENTING ACTIVITY 2 (416 aa).

Residues 191 to 219 (CEALKTEEEKLQLELQRSRARYDADQCEV) adopt a coiled-coil conformation. The chain crosses the membrane as a helical span at residues 338–354 (LIVYSLILSCCCYTCCI).

Expressed in roots, leaves, stems, flowers and siliques. In the root, high levels of expression in vascular tissues, in the stele and endodermis, but no expression in the cortex, epidermis, root cap, promeristem and adjacent elongation zone of the primary root. Not expressed in root hairs. Detected in shoot apical meristem, leaf mesophyll cells and vascular tissues, upper half of inflorescence, but not in petioles of rosette leaves.

It localises to the cell membrane. Its activity is regulated as follows. Inhibited by GdCl(3), but not by verapamil. In terms of biological role, calcium-permeable stretch-activated channel component. Probably involved in mechanosensing and in mechano-stimulated calcium uptake mechanism. The chain is Protein MID1-COMPLEMENTING ACTIVITY 2 (MCA2) from Arabidopsis thaliana (Mouse-ear cress).